We begin with the raw amino-acid sequence, 110 residues long: MSIQNLNTFDPFADAIKGADYDVQDGLVHIRIQQRNGRKTLTTVQGLSAEYDLKKIVRACKKEFACNGTVIEHPEYGEVLQLQGDQRENICQWLTKSGLAKPEQLKVHGF.

It belongs to the SUI1 family.

In terms of biological role, probably involved in translation. The chain is Eukaryotic translation initiation factor eIF1 from Anopheles gambiae (African malaria mosquito).